The primary structure comprises 456 residues: Alcohol acyltransferase 17 (456 aa).

Catalysis depends on proton acceptor residues histidine 166 and aspartate 382.

The protein belongs to the plant acyltransferase family. Expressed in fruit.

Its function is as follows. Involved in the biosynthesis of volatile esters which confer kiwifruit flavor. Alcohol acyl transferase that can use a wide range of alcohols as substrate to produce esters. This Actinidia deliciosa (Kiwi) protein is Alcohol acyltransferase 17.